The following is a 92-amino-acid chain: UPF0223 protein SSP1692 (92 aa).

Belongs to the UPF0223 family.

This is UPF0223 protein SSP1692 from Staphylococcus saprophyticus subsp. saprophyticus (strain ATCC 15305 / DSM 20229 / NCIMB 8711 / NCTC 7292 / S-41).